Consider the following 335-residue polypeptide: MAEGGSPDGRAGPGSAGRNLKEWLREQFCDHPLEHCEDTRLHDAAYVGDLQTLRSLLQEESYRSRINEKSVWCCGWLPCTPLRIAATAGHGSCVDFLIRKGAEVDLVDVKGQTALYVAVVNGHLESTQILLEAGADPNGSRHHRSTPVYHASRVGRADILKALIRYGADVDVNHHLTPDVQPRFSRRLTSLVVCPLYISAAYHNLQCFRLLLLAGANPDFNCNGPVNTQGFYRGSPGCVMDAVLRHGCEAAFVSLLVEFGANLNLVKWESLGPESRGRRKVDPEALQVFKEARSVPRTLLCLCRVAVRRALGKHRLHLIPSLPLPDPIKKFLLHE.

6 ANK repeats span residues 36–68, 77–106, 110–139, 143–172, 191–220, and 235–265; these read CEDT…RINE, LPCT…EVDL, KGQT…DPNG, HRST…DVDV, LVVC…NPDF, and SPGC…NLNL. The SOCS box domain occupies 286–335; the sequence is LQVFKEARSVPRTLLCLCRVAVRRALGKHRLHLIPSLPLPDPIKKFLLHE.

This sequence belongs to the ankyrin SOCS box (ASB) family. Interacts with CUL5 and RNF7. Interacts with TAB2 and TAB3.

The protein resides in the cytoplasm. Its pathway is protein modification; protein ubiquitination. Functionally, probable substrate-recognition component of a SCF-like ECS (Elongin-Cullin-SOCS-box protein) E3 ligase complex which mediates the ubiquitination and subsequent proteasomal degradation of target proteins. Mediates Notch-induced ubiquitination and degradation of TCF3/E2A and JAK2. Functions as a tumor suppressor by enhancing CHCHD3 'Lys-48'-linked ubiquitination, leading to inhibition of the CHCHD3/ROS signaling pathway. Suppresses TAB2-linked 'Lys-48' polyubiquitination and consequently facilitates the initiation of NF-kappa-B and MAPK signaling cascades. May play a role in testis development. The polypeptide is Ankyrin repeat and SOCS box protein 1 (ASB1) (Homo sapiens (Human)).